Reading from the N-terminus, the 250-residue chain is Coproheme decarboxylase (250 aa).

Residues Arg131, 145 to 149 (YPMNK), His172, and Gln185 contribute to the Fe-coproporphyrin III site. Tyr145 is an active-site residue.

Belongs to the ChdC family. Type 1 subfamily. Fe-coproporphyrin III is required as a cofactor.

The enzyme catalyses Fe-coproporphyrin III + 2 H2O2 + 2 H(+) = heme b + 2 CO2 + 4 H2O. It catalyses the reaction Fe-coproporphyrin III + H2O2 + H(+) = harderoheme III + CO2 + 2 H2O. The catalysed reaction is harderoheme III + H2O2 + H(+) = heme b + CO2 + 2 H2O. It participates in porphyrin-containing compound metabolism; protoheme biosynthesis. Its function is as follows. Involved in coproporphyrin-dependent heme b biosynthesis. Catalyzes the decarboxylation of Fe-coproporphyrin III (coproheme) to heme b (protoheme IX), the last step of the pathway. The reaction occurs in a stepwise manner with a three-propionate intermediate. This is Coproheme decarboxylase from Staphylococcus aureus (strain Mu50 / ATCC 700699).